Here is a 388-residue protein sequence, read N- to C-terminus: UDP-N-acetylglucosamine--N-acetylmuramyl-(pentapeptide) pyrophosphoryl-undecaprenol N-acetylglucosamine transferase (388 aa).

Residues 15 to 17, Asn125, Arg168, Ser196, and Gln297 each bind UDP-N-acetyl-alpha-D-glucosamine; that span reads TGG.

Belongs to the glycosyltransferase 28 family. MurG subfamily.

The protein resides in the cell inner membrane. It carries out the reaction di-trans,octa-cis-undecaprenyl diphospho-N-acetyl-alpha-D-muramoyl-L-alanyl-D-glutamyl-meso-2,6-diaminopimeloyl-D-alanyl-D-alanine + UDP-N-acetyl-alpha-D-glucosamine = di-trans,octa-cis-undecaprenyl diphospho-[N-acetyl-alpha-D-glucosaminyl-(1-&gt;4)]-N-acetyl-alpha-D-muramoyl-L-alanyl-D-glutamyl-meso-2,6-diaminopimeloyl-D-alanyl-D-alanine + UDP + H(+). It functions in the pathway cell wall biogenesis; peptidoglycan biosynthesis. Cell wall formation. Catalyzes the transfer of a GlcNAc subunit on undecaprenyl-pyrophosphoryl-MurNAc-pentapeptide (lipid intermediate I) to form undecaprenyl-pyrophosphoryl-MurNAc-(pentapeptide)GlcNAc (lipid intermediate II). The chain is UDP-N-acetylglucosamine--N-acetylmuramyl-(pentapeptide) pyrophosphoryl-undecaprenol N-acetylglucosamine transferase from Novosphingobium aromaticivorans (strain ATCC 700278 / DSM 12444 / CCUG 56034 / CIP 105152 / NBRC 16084 / F199).